The chain runs to 40 residues: Photosystem II reaction center protein J (40 aa).

A helical membrane pass occupies residues 8–28 (IPLWIIGTVTGILVIGLVGIF).

This sequence belongs to the PsbJ family. As to quaternary structure, PSII is composed of 1 copy each of membrane proteins PsbA, PsbB, PsbC, PsbD, PsbE, PsbF, PsbH, PsbI, PsbJ, PsbK, PsbL, PsbM, PsbT, PsbX, PsbY, PsbZ, Psb30/Ycf12, at least 3 peripheral proteins of the oxygen-evolving complex and a large number of cofactors. It forms dimeric complexes.

The protein localises to the plastid. Its subcellular location is the chloroplast thylakoid membrane. Functionally, one of the components of the core complex of photosystem II (PSII). PSII is a light-driven water:plastoquinone oxidoreductase that uses light energy to abstract electrons from H(2)O, generating O(2) and a proton gradient subsequently used for ATP formation. It consists of a core antenna complex that captures photons, and an electron transfer chain that converts photonic excitation into a charge separation. The chain is Photosystem II reaction center protein J from Jasminum nudiflorum (Winter jasmine).